Reading from the N-terminus, the 135-residue chain is Small ribosomal subunit protein eS6 (135 aa).

It belongs to the eukaryotic ribosomal protein eS6 family.

This is Small ribosomal subunit protein eS6 from Methanospirillum hungatei JF-1 (strain ATCC 27890 / DSM 864 / NBRC 100397 / JF-1).